The following is a 329-amino-acid chain: GTPase Obg (329 aa).

An Obg domain is found at 1 to 159 (MQFIDQARIT…WFLQLELKLL (159 aa)). Residues 160-328 (AEVGIIGLPN…LLAQVWKELG (169 aa)) enclose the OBG-type G domain. ATP contacts are provided by residues 166-173 (GLPNAGKS), 191-195 (FTTLV), 213-216 (DIPG), 280-283 (NKQE), and 309-311 (SAA). Mg(2+) is bound by residues Ser-173 and Thr-193.

It belongs to the TRAFAC class OBG-HflX-like GTPase superfamily. OBG GTPase family. As to quaternary structure, monomer. The cofactor is Mg(2+).

It localises to the cytoplasm. Its function is as follows. An essential GTPase which binds GTP, GDP and possibly (p)ppGpp with moderate affinity, with high nucleotide exchange rates and a fairly low GTP hydrolysis rate. Plays a role in control of the cell cycle, stress response, ribosome biogenesis and in those bacteria that undergo differentiation, in morphogenesis control. The chain is GTPase Obg from Prochlorococcus marinus (strain MIT 9303).